The sequence spans 719 residues: MEKILFYLFLIGIAVKAQICPKRCVCQILSPNLATLCAKKGLLFVPPNIDRRTVELRLADNFVTNIKRKDFANMTSLVDLTLSRNTISFITPHAFADLRNLRALHLNSNRLTKITNDMFSGLSNLHHLILNNNQLTLISSTAFDDVFALEELDLSYNNLETIPWDAVEKMVSLHTLSLDHNMIDNIPKGTFSHLHKMTRLDVTSNKLQKLPPDPLFQRAQVLATSGIISPSTFALSFGGNPLHCNCELLWLRRLSREDDLETCASPPLLTGRYFWSIPEEEFLCEPPLITRHTHEMRVLEGQRATLRCKARGDPEPAIHWISPEGKLISNATRSLVYDNGTLDILITTVKDTGAFTCIASNPAGEATQIVDLHIIKLPHLLNSTNHIHEPDPGSSDISTSTKSGSNTSSSNGDTKLSQDKIVVAEATSSTALLKFNFQRNIPGIRMFQIQYNGTYDDTLVYRMIPPTSKTFLVNNLAAGTMYDLCVLAIYDDGITSLTATRVVGCIQFTTEQDYVRCHFMQSQFLGGTMIIIIGGIIVASVLVFIIILMIRYKVCNNNGQHKVTKVSNVYSQTNGAQIQGCSVTLPQSVSKQAVGHEENAQCCKATSDNVIQSSETCSSQDSSTTTSALPPSWTSSTSVSQKQKRKTGTKPSTEPQNEAVTNVESQNTNRNNSTALQLASRPPDSVTEGPTSKRAHIKPNALLTNVDQIVQETQRLELI.

The first 17 residues, 1–17 (MEKILFYLFLIGIAVKA), serve as a signal peptide directing secretion. The region spanning 18–51 (QICPKRCVCQILSPNLATLCAKKGLLFVPPNIDR) is the LRRNT domain. The Extracellular portion of the chain corresponds to 18-529 (QICPKRCVCQ…MQSQFLGGTM (512 aa)). LRR repeat units follow at residues 52-73 (RTVE…DFAN), 76-97 (SLVD…AFAD), 100-121 (NLRA…MFSG), 124-145 (NLHH…AFDD), 148-169 (ALEE…AVEK), 172-193 (SLHT…TFSH), and 196-217 (KMTR…PLFQ). Asn73 carries an N-linked (GlcNAc...) asparagine glycan. Positions 240–286 (NPLHCNCELLWLRRLSREDDLETCASPPLLTGRYFWSIPEEEFLCEP) constitute an LRRCT domain. Positions 287-373 (PLITRHTHEM…GEATQIVDLH (87 aa)) constitute an Ig-like domain. A disulfide bond links Cys308 and Cys357. N-linked (GlcNAc...) asparagine glycans are attached at residues Asn330, Asn339, Asn382, Asn406, and Asn452. The interval 385–414 (NHIHEPDPGSSDISTSTKSGSNTSSSNGDT) is disordered. Low complexity predominate over residues 393–414 (GSSDISTSTKSGSNTSSSNGDT). The Fibronectin type-III domain occupies 414–503 (TKLSQDKIVV…ITSLTATRVV (90 aa)). A helical transmembrane segment spans residues 530–550 (IIIIGGIIVASVLVFIIILMI). Residues 551–719 (RYKVCNNNGQ…VQETQRLELI (169 aa)) are Cytoplasmic-facing. The span at 615 to 627 (ETCSSQDSSTTTS) shows a compositional bias: low complexity. A disordered region spans residues 615–694 (ETCSSQDSST…SVTEGPTSKR (80 aa)). Polar residues-rich tracts occupy residues 628–641 (ALPP…SVSQ) and 649–677 (TKPS…TALQ).

This sequence belongs to the LRFN family. In terms of assembly, can form heteromeric complexes with LRFN1, LRFN2, LRFN3 and LFRN4. Able to form homomeric complexes across cell junctions, between adjacent cells. Does not interact with DLG1, DLG2, DLG3 and DLG4.

The protein localises to the membrane. Cell adhesion molecule that mediates homophilic cell-cell adhesion in a Ca(2+)-independent manner. Promotes neurite outgrowth in hippocampal neurons. In Homo sapiens (Human), this protein is Leucine-rich repeat and fibronectin type-III domain-containing protein 5 (LRFN5).